The sequence spans 181 residues: Oligoribonuclease (181 aa).

In terms of domain architecture, Exonuclease spans leucine 8 to leucine 171. Tyrosine 129 is a catalytic residue.

This sequence belongs to the oligoribonuclease family. As to quaternary structure, homodimer.

It localises to the cytoplasm. Functionally, 3'-to-5' exoribonuclease specific for small oligoribonucleotides. The polypeptide is Oligoribonuclease (Escherichia coli O139:H28 (strain E24377A / ETEC)).